A 466-amino-acid polypeptide reads, in one-letter code: FERM domain-containing protein 8 (466 aa).

Residue methionine 1 is modified to N-acetylmethionine. Residues 1-21 (MEGAEGNAGQPGPAERSHRSS) are disordered. Serine 24 is modified (phosphoserine). The 348-residue stretch at 30-377 (ADVLVYLADD…YCIELSQAAE (348 aa)) folds into the FERM domain. The disordered stretch occupies residues 379 to 409 (TLSQESASGPHEAPSPSPPPTQRPKLRRQGS). Serine 384 bears the Phosphoserine mark. Positions 391–400 (APSPSPPPTQ) are enriched in pro residues. Phosphoserine is present on serine 409. Threonine 420 carries the phosphothreonine modification. Residues serine 440 and serine 447 each carry the phosphoserine modification. Residues 442-460 (FSRQLSSSQGSYTVVQPTD) show a composition bias toward polar residues. The tract at residues 442–466 (FSRQLSSSQGSYTVVQPTDDSLEQS) is disordered.

In terms of assembly, interacts with iRhom proteins, including iRhom2/RHBDF2 (via cytoplasmic N-termini); this interaction leads to mutual protein stabilization. Interacts with LRP6; this interaction affects LRP6-binding to AXIN1. Widely expressed (at protein level).

It localises to the cytoplasm. The protein resides in the cytosol. The protein localises to the cell membrane. In terms of biological role, promotes the cell surface stability of iRhom1/RHBDF1 and iRhom2/RHBDF2 and prevents their degradation via the endolysosomal pathway. By acting on iRhoms, involved in ADAM17-mediated shedding of TNF, amphiregulin/AREG, HBEGF and TGFA from the cell surface. Negatively regulates Wnt signaling, possibly by antagonizing the recruitment of AXIN1 to LRP6. The protein is FERM domain-containing protein 8 (Frmd8) of Mus musculus (Mouse).